Reading from the N-terminus, the 282-residue chain is Biotin synthase (282 aa).

The Radical SAM core domain maps to 1–228; it reads MQEIFLCSIS…NARLMVAGGR (228 aa). Residues cysteine 17, cysteine 21, and cysteine 24 each contribute to the [4Fe-4S] cluster site. The [2Fe-2S] cluster site is built by cysteine 61, cysteine 96, cysteine 154, and arginine 221.

The protein belongs to the radical SAM superfamily. Biotin synthase family. As to quaternary structure, homodimer. [4Fe-4S] cluster serves as cofactor. Requires [2Fe-2S] cluster as cofactor.

It carries out the reaction (4R,5S)-dethiobiotin + (sulfur carrier)-SH + 2 reduced [2Fe-2S]-[ferredoxin] + 2 S-adenosyl-L-methionine = (sulfur carrier)-H + biotin + 2 5'-deoxyadenosine + 2 L-methionine + 2 oxidized [2Fe-2S]-[ferredoxin]. It functions in the pathway cofactor biosynthesis; biotin biosynthesis; biotin from 7,8-diaminononanoate: step 2/2. Functionally, catalyzes the conversion of dethiobiotin (DTB) to biotin by the insertion of a sulfur atom into dethiobiotin via a radical-based mechanism. The protein is Biotin synthase of Helicobacter pylori (strain Shi470).